An 88-amino-acid polypeptide reads, in one-letter code: Small ribosomal subunit protein bS20 (88 aa).

Residues 1–23 (MANSPQAKKRARQNDKARAHNAS) are disordered.

The protein belongs to the bacterial ribosomal protein bS20 family.

In terms of biological role, binds directly to 16S ribosomal RNA. The sequence is that of Small ribosomal subunit protein bS20 from Teredinibacter turnerae (strain ATCC 39867 / T7901).